The primary structure comprises 508 residues: Histidine ammonia-lyase (508 aa).

Positions alanine 145–glycine 147 form a cross-link, 5-imidazolinone (Ala-Gly). A 2,3-didehydroalanine (Ser) modification is found at serine 146.

Belongs to the PAL/histidase family. Contains an active site 4-methylidene-imidazol-5-one (MIO), which is formed autocatalytically by cyclization and dehydration of residues Ala-Ser-Gly.

The protein resides in the cytoplasm. It catalyses the reaction L-histidine = trans-urocanate + NH4(+). It functions in the pathway amino-acid degradation; L-histidine degradation into L-glutamate; N-formimidoyl-L-glutamate from L-histidine: step 1/3. This is Histidine ammonia-lyase from Myxococcus xanthus (strain DK1622).